The sequence spans 102 residues: Small ribosomal subunit protein uS10 (102 aa).

The protein belongs to the universal ribosomal protein uS10 family. Part of the 30S ribosomal subunit.

Functionally, involved in the binding of tRNA to the ribosomes. The polypeptide is Small ribosomal subunit protein uS10 (Lactobacillus gasseri (strain ATCC 33323 / DSM 20243 / BCRC 14619 / CIP 102991 / JCM 1131 / KCTC 3163 / NCIMB 11718 / NCTC 13722 / AM63)).